The primary structure comprises 192 residues: Large ribosomal subunit protein bL9 (192 aa).

Residues 173-192 are disordered; the sequence is ALRPEDFFDPEADGVDEDEA. Over residues 179-192 the composition is skewed to acidic residues; it reads FFDPEADGVDEDEA.

The protein belongs to the bacterial ribosomal protein bL9 family.

In terms of biological role, binds to the 23S rRNA. The polypeptide is Large ribosomal subunit protein bL9 (rplI) (Rhizobium leguminosarum bv. trifolii).